Here is a 250-residue protein sequence, read N- to C-terminus: Probable transcriptional regulatory protein RC1_1808 (250 aa).

The disordered stretch occupies residues 1–21 (MAGHSQFKNIMHRKGAQDAKR).

Belongs to the TACO1 family.

The protein localises to the cytoplasm. This chain is Probable transcriptional regulatory protein RC1_1808, found in Rhodospirillum centenum (strain ATCC 51521 / SW).